We begin with the raw amino-acid sequence, 765 residues long: Nucleolar transcription factor 1 (765 aa).

Residue Met1 is modified to N-acetylmethionine. Positions 1–21 (MNGEADCPTDLEMAAPKGQDR) are disordered. DNA-binding regions (HMG box) lie at residues 112-180 (PKKP…ARFR) and 196-264 (PEKP…RDYI). At Thr201 the chain carries Phosphothreonine. Phosphoserine is present on residues Ser273, Ser336, and Ser364. A DNA-binding region (HMG box 3) is located at residues 298 to 362 (TKPPPNSYSL…DYEVELLRFL (65 aa)). Positions 370-379 (QQRVLGEEKM) are enriched in basic and acidic residues. A disordered region spans residues 370-411 (QQRVLGEEKMLNINKKQTTSPASKKPSQEGGKGGSEKPKRPV). Residues Ser389, Ser412, Ser433, Ser435, Ser484, Ser495, Ser546, Ser584, and Ser638 each carry the phosphoserine modification. DNA-binding regions (HMG box) lie at residues 407 to 475 (PKRP…GGER), 482 to 549 (PESP…SEMR), and 568 to 634 (KKPP…DLWV). The disordered stretch occupies residues 456-487 (YKAREAALKAQSERKPGGEREDRGKLPESPKR). A compositionally biased stretch (basic and acidic residues) spans 457-487 (KAREAALKAQSERKPGGEREDRGKLPESPKR). Residues 546–576 (SEMRAPPAATNSSKKMKFQGEPKKPPMNGYQ) are disordered. Residues 649 to 765 (ISNKRKNMTK…SGDSSDSGSN (117 aa)) form a disordered region. Over residues 664–674 (PKSSRTTLQSK) the composition is skewed to polar residues. Positions 677 to 746 (SEEDDDEEEE…DDDEDEDNES (70 aa)) are enriched in acidic residues. Residues 747–765 (EGSSSSSSSSGDSSDSGSN) are compositionally biased toward low complexity.

In terms of assembly, homodimer. Part of Pol I pre-initiation complex (PIC), in which Pol I core assembles with RRN3 and promoter-bound UTBF and SL1/TIF-IB complex. Interacts with TOP2A in the context of Pol I complex. Interacts with TBP. Interacts with TAF1A. Interacts with RASL11A. Binds to IRS1 and PIK3CA. Interacts with DHX33. Interacts with PHF6. Interacts with CEBPA (isoform 1 and isoform 4). Interacts with DDX11. Interacts with NOP53. Interacts with ALKBH2. Post-translationally, phosphorylated and activated by PIK3CA.

The protein localises to the nucleus. It is found in the nucleolus. In terms of biological role, recognizes the ribosomal RNA gene promoter and activates transcription mediated by RNA polymerase I through cooperative interactions with the transcription factor SL1/TIF-IB complex. It binds specifically to the upstream control element. The sequence is that of Nucleolar transcription factor 1 (Ubtf) from Mus musculus (Mouse).